The following is a 492-amino-acid chain: MSLVMISENVKLAREYALLGNYDSAMVYYQGVLDQMNKYLYSLRDTYLQQKWQQVWQEISVEAKHVKDIMKMLESFKIDSTPPKASQQELPAHDAEVWSLPVPAERRPSPGPRKRQSAQYSDCRGHNNRISAAVRGPHRPSSRNPNDKGKAVRGREKKDQQNKGKEEKSKSTSEISESEPKKFDSTGYDKDLVEALERDIISQNPNIRWDDIADLVEAKKLLKEAVVLPMWMPEFFKGIRRPWKGVLMVGPPGTGKTLLAKAVATECKTTFFNVSSSTLTSKYRGESEKLVRLLFEMARFYAPTTIFIDEIDSICSRRGTSEEHEASRRVKAELLVQMDGVGGATENDDPSKMVMVLAATNFPWDIDEALRRRLEKRIYIPLPSAKGREELLRINLRELELADDVDLANIAEKMEGYSGADITNVCRDASLMAMRRRIEGLTPEEIRNLSRDEMHMPTTMEDFEIALKKVSKSVSAADIEKYEKWIVEFGSC.

A disordered region spans residues serine 80–threonine 186. Residues proline 145–serine 171 are compositionally biased toward basic and acidic residues. Residue glycine 250 to threonine 257 coordinates ATP.

It belongs to the AAA ATPase family. Katanin p60 subunit A1 subfamily. In terms of assembly, can homooligomerize into hexameric rings, which may be promoted by interaction with microtubules. Interacts with KATNB1, which may serve as a targeting subunit.

Its subcellular location is the cytoplasm. It is found in the cytoskeleton. The protein localises to the microtubule organizing center. It localises to the centrosome. The protein resides in the spindle pole. Its subcellular location is the spindle. The catalysed reaction is n ATP + n H2O + a microtubule = n ADP + n phosphate + (n+1) alpha/beta tubulin heterodimers.. With respect to regulation, ATPase activity is stimulated by microtubules, which promote homooligomerization. ATP-dependent microtubule severing is stimulated by interaction with KATNB1. Catalytic subunit of a complex which severs microtubules in an ATP-dependent manner. Microtubule severing may promote rapid reorganization of cellular microtubule arrays and the release of microtubules from the centrosome following nucleation. This Gallus gallus (Chicken) protein is Katanin p60 ATPase-containing subunit A1.